Reading from the N-terminus, the 546-residue chain is Metal transporter Nramp6.2 (546 aa).

Helical transmembrane passes span 50 to 70 (FLPYVGPGFLVSLAYLDPGNL), 83 to 103 (ELLWVILIGLIFALIIQSLAA), 128 to 150 (SLWLLAEVAVIAADIPEVIGTAF), 154 to 176 (ILFHIPVWAGVLMTGLSTLLLLG), 187 to 207 (LLISALVFTMAACFFGELSYV), 233 to 253 (IALLGALVMPHNLFLHSALVL), 270 to 290 (YFLIESGFALFVAFLINVSII), and 333 to 353 (IYAIALLASGQSSTITGTYAG). Asn-371 is a glycosylation site (N-linked (GlcNAc...) asparagine). 4 helical membrane-spanning segments follow: residues 374–394 (TRCIAILPSLFVSIIGGSSGA), 397–417 (LIIIASMILSFELPFALIPLL), 433–453 (IYIIVISWTLGFMIIGINVYY), and 473–493 (VIIGIIVFPLMAIYILAIIYL).

This sequence belongs to the NRAMP (TC 2.A.55) family.

The protein resides in the membrane. Functionally, probable divalent metal transporter. In Populus trichocarpa (Western balsam poplar), this protein is Metal transporter Nramp6.2.